Consider the following 339-residue polypeptide: N-acetyl-gamma-glutamyl-phosphate reductase 1 (339 aa).

The active site involves Cys149.

It belongs to the NAGSA dehydrogenase family. Type 1 subfamily.

It localises to the cytoplasm. It catalyses the reaction N-acetyl-L-glutamate 5-semialdehyde + phosphate + NADP(+) = N-acetyl-L-glutamyl 5-phosphate + NADPH + H(+). The protein operates within amino-acid biosynthesis; L-arginine biosynthesis; N(2)-acetyl-L-ornithine from L-glutamate: step 3/4. Its function is as follows. Catalyzes the NADPH-dependent reduction of N-acetyl-5-glutamyl phosphate to yield N-acetyl-L-glutamate 5-semialdehyde. In Lactiplantibacillus plantarum (strain ATCC BAA-793 / NCIMB 8826 / WCFS1) (Lactobacillus plantarum), this protein is N-acetyl-gamma-glutamyl-phosphate reductase 1.